A 162-amino-acid polypeptide reads, in one-letter code: Nucleotide-binding protein SGR_2909 (162 aa).

It belongs to the YajQ family.

In terms of biological role, nucleotide-binding protein. The polypeptide is Nucleotide-binding protein SGR_2909 (Streptomyces griseus subsp. griseus (strain JCM 4626 / CBS 651.72 / NBRC 13350 / KCC S-0626 / ISP 5235)).